The chain runs to 468 residues: BTB/POZ domain-containing protein 17 (468 aa).

Residues 1-16 form the signal peptide; it reads MRRFCVVPLLLVLVEA. Residues 51–120 form the BTB domain; sequence TDTILRIRTA…FYCGEISVNL (70 aa). Positions 159–259 constitute a BACK domain; the sequence is VVSWYHYALR…ISPSQLFQIQ (101 aa).

It is found in the secreted. The protein is BTB/POZ domain-containing protein 17 (btbd17) of Xenopus tropicalis (Western clawed frog).